A 229-amino-acid polypeptide reads, in one-letter code: Potassium/proton antiporter CemA (229 aa).

4 consecutive transmembrane segments (helical) span residues 7 to 27, 114 to 134, 154 to 174, and 189 to 209; these read FTPL…SLSL, IICF…LLIL, ILLL…ELMI, and IISG…KYWI.

Belongs to the CemA family.

The protein localises to the plastid. It localises to the chloroplast inner membrane. The enzyme catalyses K(+)(in) + H(+)(out) = K(+)(out) + H(+)(in). Contributes to K(+)/H(+) antiport activity by supporting proton efflux to control proton extrusion and homeostasis in chloroplasts in a light-dependent manner to modulate photosynthesis. Prevents excessive induction of non-photochemical quenching (NPQ) under continuous-light conditions. Indirectly promotes efficient inorganic carbon uptake into chloroplasts. This Vitis vinifera (Grape) protein is Potassium/proton antiporter CemA.